Reading from the N-terminus, the 634-residue chain is uncharacterized protein (634 aa).

The first 40 residues, 1–40, serve as a signal peptide directing secretion; it reads MWLQQRLKGLPGLLSSSWARRLLCLLGLLVLLLWFAGSGA. At 41–589 the chain is on the extracellular side; it reads RRAAGGLQLL…DEHMAQQDPG (549 aa). N363 carries an N-linked (GlcNAc...) asparagine glycan. A helical transmembrane segment spans residues 590 to 610; it reads LPFLFWFSVASLITLFHLFLF. Topologically, residues 611–634 are cytoplasmic; the sequence is KLIYNEYCGPGAKPFFRNKEDPSV.

It localises to the membrane. This is an uncharacterized protein from Bos taurus (Bovine).